A 620-amino-acid polypeptide reads, in one-letter code: Protein AFR1 (620 aa).

Over residues 1–12 the composition is skewed to polar residues; sequence MEGSYLSAQENQ. The disordered stretch occupies residues 1 to 20; sequence MEGSYLSAQENQPIPERLIP. 2 positions are modified to phosphoserine: S472 and S526.

The protein to yeast YER158C.

Functionally, acts in conjunction with the alpha-factor receptor to promote morphogenesis and adaptation. This is Protein AFR1 (AFR1) from Saccharomyces cerevisiae (strain ATCC 204508 / S288c) (Baker's yeast).